A 334-amino-acid chain; its full sequence is tRNA uridine(34) hydroxylase (334 aa).

The region spanning 123 to 217 (SDPDVILVDT…YLEEVKQEES (95 aa)) is the Rhodanese domain. Catalysis depends on Cys177, which acts as the Cysteine persulfide intermediate.

This sequence belongs to the TrhO family.

It carries out the reaction uridine(34) in tRNA + AH2 + O2 = 5-hydroxyuridine(34) in tRNA + A + H2O. Functionally, catalyzes oxygen-dependent 5-hydroxyuridine (ho5U) modification at position 34 in tRNAs. In Shewanella putrefaciens (strain CN-32 / ATCC BAA-453), this protein is tRNA uridine(34) hydroxylase.